Here is a 483-residue protein sequence, read N- to C-terminus: ATP-dependent RNA helicase DDX25 (483 aa).

The Q motif motif lies at 97–125 (KSFEELHLKNELLRGIYAMGFNRPSKIQE). Residues 130 to 300 (MMLADPPQNL…ERIVPDPNII (171 aa)) enclose the Helicase ATP-binding domain. Position 143-150 (143-150 (SQSGTGKT)) interacts with ATP. The short motif at 247–250 (DEAD) is the DEAD box element. One can recognise a Helicase C-terminal domain in the interval 311–478 (NIQQFYDQCE…KLNSMDMDEM (168 aa)).

It belongs to the DEAD box helicase family. As to expression, an mRNA component of germ plasm. Localizes to the granulo-fibrillar material (GFM) of the mitochondrial cloud in stage I oocytes. Associated, at a low level, with the periphery of mature germinal granules in later stage oocytes. Localizes to the vegetal cortex in stage II oocytes and segregates with germ plasm during early embryogenesis. In adults, expression is restricted to the ovary and, at a lower level, to spermatogonia, spermatocytes and spermatids of the testis.

It is found in the cytoplasm. It localises to the nucleus. The catalysed reaction is ATP + H2O = ADP + phosphate + H(+). ATP-dependent RNA helicase. The protein is ATP-dependent RNA helicase DDX25 of Xenopus laevis (African clawed frog).